The sequence spans 469 residues: Programmed cell death protein 4 (469 aa).

Position 1 is an N-acetylmethionine (Met1). 2 disordered regions span residues 1-38 (MDVENEQILNVNPADPDNLSDSLFSGDEENAGTEEIKN) and 58-128 (KAKR…GTPG). At Ser25 the chain carries Phosphoserine. The Nuclear localization signal signature appears at 58–64 (KAKRRLR). Ser67 is subject to Phosphoserine; by PKB and RPS6KB1. Phosphoserine occurs at positions 68, 71, 76, 78, 80, and 94. The Phosphodegron signature appears at 70–76 (DSGRGDS). Residues 74–83 (GDSVSDSGSD) are compositionally biased toward low complexity. The span at 114-125 (KKGGAGGKGVWG) shows a compositional bias: gly residues. Tyr152 is subject to Phosphotyrosine. Positions 163-284 (AFEKTLTPII…CNTYIDSYKG (122 aa)) constitute an MI 1 domain. The short motif at 241-250 (DKLLKDLPEL) is the Nuclear localization signal element. A phosphoserine mark is found at Ser313 and Ser317. The MI 2 domain maps to 326–449 (HLVKEIDMLL…SKQLRDLCPS (124 aa)). Position 457 is a phosphoserine; by PKB (Ser457).

The protein belongs to the PDCD4 family. In terms of assembly, interacts (via MI domains) with EIF4A2. Interacts (via MI domains) with EIF4A1 (via N-terminal domain). Heterotrimer with EIF4A1; one molecule of PDCD4 binds two molecules of EIF4A1. Interacts with EIF4G1. May form a complex with EIF4A1 and EIF4G1. The interaction between PDCD4 and EIF4A1 interferes with the interaction between EIF4A1 and EIF4G. When phosphorylated, interacts with BTRC and FBXW11. Polyubiquitinated, leading to its proteasomal degradation. Rapidly degraded in response to mitogens. Phosphorylation of the phosphodegron promotes interaction with BTRC and proteasomal degradation. In terms of processing, phosphorylated at Ser-67 by RPS6KB1 in response to mitogens; phosphorylation promotes proteasomal degradation of PDCD4. In terms of tissue distribution, up-regulated in proliferative cells. Highly expressed in epithelial cells of the mammary gland. Reduced expression in lung cancer and colon carcinoma.

It localises to the nucleus. The protein resides in the cytoplasm. Its function is as follows. Inhibits translation initiation and cap-dependent translation. May excert its function by hindering the interaction between EIF4A1 and EIF4G. Inhibits the helicase activity of EIF4A. Modulates the activation of JUN kinase. Down-regulates the expression of MAP4K1, thus inhibiting events important in driving invasion, namely, MAPK85 activation and consequent JUN-dependent transcription. May play a role in apoptosis. Tumor suppressor. Inhibits tumor promoter-induced neoplastic transformation. Binds RNA. This chain is Programmed cell death protein 4 (PDCD4), found in Homo sapiens (Human).